The sequence spans 1025 residues: Fanconi-associated nuclease 1 (1025 aa).

The UBZ4-type zinc-finger motif lies at 40–68; sequence KLACPICSKMVPRYDLNWHLDEKCANNDN. Residues cysteine 43, cysteine 46, histidine 58, and cysteine 63 each coordinate Zn(2+). A disordered region spans residues 98–120; it reads TPGKLSPSKASLTPDPSDSAKMG. At serine 182 the chain carries Phosphoserine. Positions 682-704 form a coiled coil; it reads VEILQRLHMYEEAVKELESLLSQ. The Mn(2+) site is built by glutamate 842, aspartate 968, glutamate 983, and valine 984. Residues 903-1015 enclose the VRR-NUC domain; that stretch reads AESLRAWVAA…GADVEVCHVV (113 aa).

This sequence belongs to the FAN1 family. In terms of assembly, interacts with FANCD2 (when monoubiquitinated). Interacts with FANCI, MLH1, MLH3 and PMS2. Requires Mn(2+) as cofactor. The cofactor is Mg(2+). In terms of processing, ubiquitinated and degraded during mitotic exit by the APC/C-Cdh1 complex.

Its subcellular location is the nucleus. It carries out the reaction Hydrolytically removes 5'-nucleotides successively from the 3'-hydroxy termini of 3'-hydroxy-terminated oligonucleotides.. Its function is as follows. Nuclease required for the repair of DNA interstrand cross-links (ICL) recruited at sites of DNA damage by monoubiquitinated FANCD2. Specifically involved in repair of ICL-induced DNA breaks by being required for efficient homologous recombination, probably in the resolution of homologous recombination intermediates. Not involved in DNA double-strand breaks resection. Acts as a 5'-3' exonuclease that anchors at a cut end of DNA and cleaves DNA successively at every third nucleotide, allowing to excise an ICL from one strand through flanking incisions. Probably keeps excising with 3'-flap annealing until it reaches and unhooks the ICL. Acts at sites that have a 5'-terminal phosphate anchor at a nick or a 1- or 2-nucleotide flap and is augmented by a 3' flap. Also has endonuclease activity toward 5'-flaps. This Ailuropoda melanoleuca (Giant panda) protein is Fanconi-associated nuclease 1 (FAN1).